Consider the following 454-residue polypeptide: Ornithine aminotransferase (454 aa).

G124, T125, and Q267 together coordinate pyridoxal 5'-phosphate. N6-(pyridoxal phosphate)lysine is present on K293. Position 321 (T321) interacts with pyridoxal 5'-phosphate.

It belongs to the class-III pyridoxal-phosphate-dependent aminotransferase family. Homotetramer; dimer of dimers. Requires pyridoxal 5'-phosphate as cofactor.

The catalysed reaction is L-ornithine + 2-oxoglutarate = L-glutamate 5-semialdehyde + L-glutamate. The enzyme catalyses L-lysine + 2-oxoglutarate = (S)-2-amino-6-oxohexanoate + L-glutamate. Functionally, catalyzes the conversion of L-ornithine and 2-oxoglutarate to L-glutamate semialdehyde and L-glutamate. L-ornithine is the best substrate, but the enzyme also shows good activity toward L-lysine, and low activity toward D-ornithine, D-lysine, 5-aminovalerate, 6-aminohexanoate and GABA. The enzyme activity is specific for 2-oxoglutarate. The chain is Ornithine aminotransferase from Pyrococcus horikoshii (strain ATCC 700860 / DSM 12428 / JCM 9974 / NBRC 100139 / OT-3).